The sequence spans 23 residues: Cysteine proteinase (23 aa).

Residues A1–G10 are compositionally biased toward basic and acidic residues. The tract at residues A1–S23 is disordered.

It belongs to the peptidase C1 family.

The sequence is that of Cysteine proteinase from Tritrichomonas foetus (Trichomonas foetus).